The chain runs to 214 residues: MIMRTDTNNILMRHLKNLTDDEFKCIIHRSSDFLYLSDRDYTSITKETLVSEIVEEYPDDCNKILAIIFLVLDKDIDVDIETKLTPTPKPAVRFAILDKMTADIKLTDLVRHYFRYIEQDIPLGPLFKKIDSYRIRAINNYSKELGLATEYFNKYGHLMFYTLPIPYNRFFCRNSIGFLAVLSPTIGYVKAFYKFIEYVSIDDRLKFKKELMSK.

Belongs to the orthopoxvirus OPG034 family.

The polypeptide is Protein OPG034 (OPG034) (Monkeypox virus).